Reading from the N-terminus, the 205-residue chain is Glycerol-3-phosphate acyltransferase (205 aa).

A run of 5 helical transmembrane segments spans residues 13-33 (LLALAALIGYLLGSIPFGLIL), 68-88 (LLLDALKGTAAVLVANALWGY), 90-110 (ASLVAGFFAFLGHLFPVWLGF), 120-140 (IGVLLGAAPLMMLAFALIWLA), and 147-167 (YSSLSALLAMLIIPVALWVLG).

Belongs to the PlsY family. Probably interacts with PlsX.

Its subcellular location is the cell inner membrane. The enzyme catalyses an acyl phosphate + sn-glycerol 3-phosphate = a 1-acyl-sn-glycero-3-phosphate + phosphate. The protein operates within lipid metabolism; phospholipid metabolism. In terms of biological role, catalyzes the transfer of an acyl group from acyl-phosphate (acyl-PO(4)) to glycerol-3-phosphate (G3P) to form lysophosphatidic acid (LPA). This enzyme utilizes acyl-phosphate as fatty acyl donor, but not acyl-CoA or acyl-ACP. This is Glycerol-3-phosphate acyltransferase from Agrobacterium fabrum (strain C58 / ATCC 33970) (Agrobacterium tumefaciens (strain C58)).